A 1435-amino-acid chain; its full sequence is DNA polymerase III PolC-type (1435 aa).

The 159-residue stretch at Tyr-404–Phe-562 folds into the Exonuclease domain.

It belongs to the DNA polymerase type-C family. PolC subfamily.

It localises to the cytoplasm. It carries out the reaction DNA(n) + a 2'-deoxyribonucleoside 5'-triphosphate = DNA(n+1) + diphosphate. Required for replicative DNA synthesis. This DNA polymerase also exhibits 3' to 5' exonuclease activity. The sequence is that of DNA polymerase III PolC-type from Mycoplasmopsis pulmonis (strain UAB CTIP) (Mycoplasma pulmonis).